The chain runs to 596 residues: Genetic interactor of prohibitins 3, mitochondrial (596 aa).

A mitochondrion-targeting transit peptide spans 1-21 (MLNLCHALRGVRQFSCSVIVK). Residues 113 to 305 (ESTLNDILNY…LFDLPGYSTS (193 aa)) form the CP-type G domain.

Belongs to the TRAFAC class YlqF/YawG GTPase family. GEP3 subfamily.

The protein resides in the mitochondrion. Its function is as follows. Interacts genetically with prohibitins and thus may be involved in the mitochondrial lipid metabolism. The protein is Genetic interactor of prohibitins 3, mitochondrial (GEP3) of Saccharomyces cerevisiae (strain AWRI796) (Baker's yeast).